A 115-amino-acid chain; its full sequence is MLDVKSQDISIPEAVVVLCTAPDEATAQDLAAKVLAEKLAACATLLPGATSLYYWEGKLEQEYEVQMILKTTVSHQQALIDCLKSHHPYQTPELLVLPVTHGDTDYLSWLNASLR.

Cu cation is bound by residues cysteine 19, histidine 86, and histidine 87.

Belongs to the CutA family. Homotrimer. Cu cation is required as a cofactor.

Its subcellular location is the cytoplasm. In terms of biological role, involved in resistance toward heavy metals. The chain is Divalent-cation tolerance protein CutA from Salmonella agona (strain SL483).